The primary structure comprises 422 residues: Histidine--tRNA ligase (422 aa).

It belongs to the class-II aminoacyl-tRNA synthetase family. Homodimer.

The protein resides in the cytoplasm. The enzyme catalyses tRNA(His) + L-histidine + ATP = L-histidyl-tRNA(His) + AMP + diphosphate + H(+). The sequence is that of Histidine--tRNA ligase from Syntrophomonas wolfei subsp. wolfei (strain DSM 2245B / Goettingen).